The primary structure comprises 657 residues: tRNA 5-methylaminomethyl-2-thiouridine biosynthesis bifunctional protein MnmC (657 aa).

The segment at 1-233 is tRNA (mnm(5)s(2)U34)-methyltransferase; the sequence is MPRALEPAEP…KWQMTVASFR (233 aa). An FAD-dependent cmnm(5)s(2)U34 oxidoreductase region spans residues 257 to 657; the sequence is IGAGLAGCAV…LRALRHGHTG (401 aa).

The protein in the N-terminal section; belongs to the methyltransferase superfamily. tRNA (mnm(5)s(2)U34)-methyltransferase family. It in the C-terminal section; belongs to the DAO family. FAD is required as a cofactor.

The protein resides in the cytoplasm. It carries out the reaction 5-aminomethyl-2-thiouridine(34) in tRNA + S-adenosyl-L-methionine = 5-methylaminomethyl-2-thiouridine(34) in tRNA + S-adenosyl-L-homocysteine + H(+). Its function is as follows. Catalyzes the last two steps in the biosynthesis of 5-methylaminomethyl-2-thiouridine (mnm(5)s(2)U) at the wobble position (U34) in tRNA. Catalyzes the FAD-dependent demodification of cmnm(5)s(2)U34 to nm(5)s(2)U34, followed by the transfer of a methyl group from S-adenosyl-L-methionine to nm(5)s(2)U34, to form mnm(5)s(2)U34. The polypeptide is tRNA 5-methylaminomethyl-2-thiouridine biosynthesis bifunctional protein MnmC (Cupriavidus necator (strain ATCC 17699 / DSM 428 / KCTC 22496 / NCIMB 10442 / H16 / Stanier 337) (Ralstonia eutropha)).